The chain runs to 391 residues: Formate-dependent phosphoribosylglycinamide formyltransferase (391 aa).

N(1)-(5-phospho-beta-D-ribosyl)glycinamide is bound by residues 18–19 (EL) and Glu78. Residues Arg110, Lys151, 156–161 (SSGKGQ), 191–194 (EEFI), and Glu199 each bind ATP. The ATP-grasp domain occupies 115–305 (DLASKDLKIK…EFELHLRAFL (191 aa)). Residues Glu264 and Glu276 each coordinate Mg(2+). N(1)-(5-phospho-beta-D-ribosyl)glycinamide contacts are provided by residues Asp283, Lys353, and 360–361 (RR).

This sequence belongs to the PurK/PurT family. As to quaternary structure, homodimer.

The catalysed reaction is N(1)-(5-phospho-beta-D-ribosyl)glycinamide + formate + ATP = N(2)-formyl-N(1)-(5-phospho-beta-D-ribosyl)glycinamide + ADP + phosphate + H(+). The protein operates within purine metabolism; IMP biosynthesis via de novo pathway; N(2)-formyl-N(1)-(5-phospho-D-ribosyl)glycinamide from N(1)-(5-phospho-D-ribosyl)glycinamide (formate route): step 1/1. Its function is as follows. Involved in the de novo purine biosynthesis. Catalyzes the transfer of formate to 5-phospho-ribosyl-glycinamide (GAR), producing 5-phospho-ribosyl-N-formylglycinamide (FGAR). Formate is provided by PurU via hydrolysis of 10-formyl-tetrahydrofolate. This chain is Formate-dependent phosphoribosylglycinamide formyltransferase, found in Prochlorococcus marinus (strain AS9601).